A 295-amino-acid polypeptide reads, in one-letter code: NAD kinase (295 aa).

The Proton acceptor role is filled by Asp72. NAD(+)-binding positions include Asp72 to Gly73, Asn146 to Asp147, Arg157, Lys174, Asp176, Thr187 to Ser192, and Gln247.

The protein belongs to the NAD kinase family. A divalent metal cation serves as cofactor.

The protein localises to the cytoplasm. It catalyses the reaction NAD(+) + ATP = ADP + NADP(+) + H(+). Functionally, involved in the regulation of the intracellular balance of NAD and NADP, and is a key enzyme in the biosynthesis of NADP. Catalyzes specifically the phosphorylation on 2'-hydroxyl of the adenosine moiety of NAD to yield NADP. The sequence is that of NAD kinase from Azotobacter vinelandii (strain DJ / ATCC BAA-1303).